The chain runs to 201 residues: Dephospho-CoA kinase (201 aa).

Residues 3 to 201 (IIGLTGGMAA…ALLHRLREAS (199 aa)) form the DPCK domain. 11–16 (AAGKST) lines the ATP pocket.

Belongs to the CoaE family.

The protein localises to the cytoplasm. It catalyses the reaction 3'-dephospho-CoA + ATP = ADP + CoA + H(+). It functions in the pathway cofactor biosynthesis; coenzyme A biosynthesis; CoA from (R)-pantothenate: step 5/5. Catalyzes the phosphorylation of the 3'-hydroxyl group of dephosphocoenzyme A to form coenzyme A. In Gluconobacter oxydans (strain 621H) (Gluconobacter suboxydans), this protein is Dephospho-CoA kinase.